The sequence spans 2124 residues: AMB antimetabolite synthetase AmbE (2124 aa).

The segment at 456 to 847 (LRAALQPQAP…LGRIDEQVKI (392 aa)) is adenylation. Residues 950 to 1147 (DVGANIGLFS…DLLRRHGFEV (198 aa)) form a methyltransferase region. The region spanning 1251–1325 (APANATEAAL…ELARLLAAPA (75 aa)) is the Carrier 1 domain. An O-(pantetheine 4'-phosphoryl)serine modification is found at Ser-1286. The segment at 1359-1780 (DAYPMTSLQQ…ALLGDPVQPP (422 aa)) is condensation. Residues 1785-1859 (AEDSVELRRV…EVVRRCHAAD (75 aa)) form the Carrier 2 domain. Ser-1819 carries the post-translational modification O-(pantetheine 4'-phosphoryl)serine. Residues 1886 to 2107 (RLIALPPAGG…AAEEVCAILR (222 aa)) form a thioesterase region.

It belongs to the NRP synthetase family. Pantetheine 4'-phosphate serves as cofactor.

The catalysed reaction is holo-[peptidyl-carrier protein] + L-glutamate + ATP = L-glutamyl-[peptidyl-carrier protein] + AMP + diphosphate. Its function is as follows. Involved in the biosynthesis of the antimetabolite L-2-amino-4-methoxy-trans-3-butenoic acid (AMB), a non-proteinogenic amino acid which is toxic for prokaryotes and eukaryotes. Adenylates L-glutamate and loads it onto its first peptidyl carrier domain via a thioester linkage to the phosphopanthetheine moiety. The second peptidyl carrier domain is loaded with a L-alanine activated by AmbB. After formation by AmbB of the L-Glu-L-Ala dipeptide at the first carrier domain of AmbE, the condensation domain of AmbE probably condenses this dipeptide with the L-Ala residue attached at the second carrier domain of AmbE to give the L-Ala-L-Glu-L-Ala tripeptide. The central amino acid, L-Glu, would then undergo a series of modifications to be converted into AMB while the two flanking L-Ala residues remain in place. Finally, the L-Ala-AMB-L-Ala tripeptide is probably released by thioester cleavage via the thioester domain of AmbE. The chain is AMB antimetabolite synthetase AmbE from Pseudomonas aeruginosa (strain ATCC 15692 / DSM 22644 / CIP 104116 / JCM 14847 / LMG 12228 / 1C / PRS 101 / PAO1).